Here is a 180-residue protein sequence, read N- to C-terminus: Interleukin-17B (180 aa).

An N-terminal signal peptide occupies residues Met-1 to Pro-22. A disordered region spans residues Pro-22–Gln-44. The span at Arg-23–Gln-32 shows a compositional bias: basic residues. A glycan (N-linked (GlcNAc...) asparagine) is linked at Asn-75. 2 disulfides stabilise this stretch: Cys-121-Cys-176 and Cys-126-Cys-178.

Belongs to the IL-17 family.

It localises to the secreted. In terms of biological role, stimulates the release of tumor necrosis factor alpha and IL-1-beta from the monocytic cell line THP-1. In Mus musculus (Mouse), this protein is Interleukin-17B (Il17b).